A 271-amino-acid polypeptide reads, in one-letter code: Type III pantothenate kinase (271 aa).

5–12 (DISNSVTK) serves as a coordination point for ATP. Substrate-binding positions include tyrosine 85 and 92 to 95 (GADR). The active-site Proton acceptor is aspartate 94. K(+) is bound at residue aspartate 114. Threonine 117 contributes to the ATP binding site. Threonine 169 contacts substrate.

Belongs to the type III pantothenate kinase family. As to quaternary structure, homodimer. It depends on NH4(+) as a cofactor. K(+) serves as cofactor.

Its subcellular location is the cytoplasm. The enzyme catalyses (R)-pantothenate + ATP = (R)-4'-phosphopantothenate + ADP + H(+). Its pathway is cofactor biosynthesis; coenzyme A biosynthesis; CoA from (R)-pantothenate: step 1/5. Catalyzes the phosphorylation of pantothenate (Pan), the first step in CoA biosynthesis. In Methylacidiphilum infernorum (isolate V4) (Methylokorus infernorum (strain V4)), this protein is Type III pantothenate kinase.